The primary structure comprises 237 residues: Ubiquinone biosynthesis O-methyltransferase (237 aa).

Residues Arg-38, Gly-58, Asp-79, and Met-124 each contribute to the S-adenosyl-L-methionine site.

This sequence belongs to the methyltransferase superfamily. UbiG/COQ3 family.

The catalysed reaction is a 3-demethylubiquinol + S-adenosyl-L-methionine = a ubiquinol + S-adenosyl-L-homocysteine + H(+). It catalyses the reaction a 3-(all-trans-polyprenyl)benzene-1,2-diol + S-adenosyl-L-methionine = a 2-methoxy-6-(all-trans-polyprenyl)phenol + S-adenosyl-L-homocysteine + H(+). The protein operates within cofactor biosynthesis; ubiquinone biosynthesis. In terms of biological role, O-methyltransferase that catalyzes the 2 O-methylation steps in the ubiquinone biosynthetic pathway. The chain is Ubiquinone biosynthesis O-methyltransferase from Acinetobacter baumannii (strain AB307-0294).